A 460-amino-acid chain; its full sequence is V-type ATP synthase beta chain (460 aa).

Belongs to the ATPase alpha/beta chains family.

Functionally, produces ATP from ADP in the presence of a proton gradient across the membrane. The V-type beta chain is a regulatory subunit. This chain is V-type ATP synthase beta chain, found in Dictyoglomus turgidum (strain DSM 6724 / Z-1310).